The following is a 429-amino-acid chain: Septin-8 (429 aa).

Residues 1 to 16 (MAATDLERVSNAEPEP) show a composition bias toward basic and acidic residues. The segment at 1 to 23 (MAATDLERVSNAEPEPRSLSLGG) is disordered. Alanine 2 carries the post-translational modification N-acetylalanine. Residue serine 10 is modified to Phosphoserine. The Septin-type G domain occupies 41–307 (QGFSFNILCV…ELYRRCKLEE (267 aa)). Residues 51–58 (GETGIGKS) form a G1 motif region. Residues 51–58 (GETGIGKS), glycine 106, 187–195 (KADTISKSE), glycine 241, and arginine 256 contribute to the GTP site. The tract at residues 103-106 (DAVG) is G3 motif. Positions 186 to 189 (AKAD) are G4 motif. The stretch at 320 to 412 (FSLQETYEAK…AAMEALQSQA (93 aa)) forms a coiled coil. A compositionally biased stretch (polar residues) spans 409 to 420 (QSQALHATSQQP). The disordered stretch occupies residues 409–429 (QSQALHATSQQPLRKDKDKKN).

This sequence belongs to the TRAFAC class TrmE-Era-EngA-EngB-Septin-like GTPase superfamily. Septin GTPase family. As to quaternary structure, septins polymerize into heterooligomeric protein complexes that form filaments, and can associate with cellular membranes, actin filaments and microtubules. GTPase activity is required for filament formation. Interacts with SEPTIN5. Interacts with CDK14, SEPTIN4 and SEPTIN7. Interacts with VAMP2; the interaction inhibits interaction of VAMP2 with SYP. Interacts with STX1A.

It is found in the cytoplasm. The protein resides in the cytoskeleton. Its subcellular location is the synapse. The protein localises to the cell projection. It localises to the axon. It is found in the cytoplasmic vesicle. The protein resides in the secretory vesicle. Its subcellular location is the synaptic vesicle membrane. The protein localises to the presynapse. Functionally, filament-forming cytoskeletal GTPase. May play a role in platelet secretion. Seems to participate in the process of SNARE complex formation in synaptic vesicles. The chain is Septin-8 from Mus musculus (Mouse).